The primary structure comprises 554 residues: MSEAEARPTNFIRQIIDEDLASGKHTTVHTRFPPEPNGYLHIGHAKSICLNFGIAQDYKGQCNLRFDDTNPVKEDIEYVDSIKNDVEWLGFHWSGNVRYSSDYFDQLHAYAIELINKGLAYVDELTPEQIREYRGTLTKPGKNSPYRDRSVEENLPLFEKMRTGGFEEGKACLRAKIDMASPFIVMRDPVLYRIKFAEHHQTGNKWCIYPMYDFTHCISDALEGITHSLCTLEFQDNRRLYDWVLDNITIPVHPRQYEFSRLNLEYTVMSKRKLNLLVTDKHVEGWDDPRMPTISGLRRRGYTAASIREFCKRIGVTKQDNTIEMASLESCIREDLNENAPRAMAVIDPVKLVIENYQGEGEMVTMPNHPNKPEMGSRQVPFSGEIWIDRADFREEANKQYKRLVLGKEVRLRNAYVIKAERVEKDAEGNITTIFCTYDADTLSKDPADGRKVKGVIHWVSAAHALPVEIRLYDRLFSVPNPGAADDFLSVINPESLVIKQGFAEPSLKDAVAGKAFQFEREGYFCLDSRHSTAEKPVFNRTVGLRDTWAKVGE.

The short motif at 34-44 is the 'HIGH' region element; it reads PEPNGYLHIGH. ATP contacts are provided by residues 35–37 and 41–47; these read EPN and HIGHAKS. Residues aspartate 67 and tyrosine 212 each contribute to the L-glutamine site. Residues threonine 231, 261–262, and 269–271 contribute to the ATP site; these read RL and MSK. Positions 268–272 match the 'KMSKS' region motif; sequence VMSKR. Positions 317–324 are interaction with tRNA; it reads TKQDNTIE.

The protein belongs to the class-I aminoacyl-tRNA synthetase family. As to quaternary structure, monomer.

It is found in the cytoplasm. The catalysed reaction is tRNA(Gln) + L-glutamine + ATP = L-glutaminyl-tRNA(Gln) + AMP + diphosphate. This chain is Glutamine--tRNA ligase, found in Shigella dysenteriae serotype 1 (strain Sd197).